The following is a 432-amino-acid chain: Glycerophosphocholine acyltransferase 1 (432 aa).

The Cytoplasmic portion of the chain corresponds to 1-110; it reads MYKLDNNDID…DSIFFKNSSR (110 aa). Phosphoserine is present on Ser-78. A helical membrane pass occupies residues 111 to 131; the sequence is LEKAFYPFTLFNIFFIGFLMG. A topological domain (lumenal) is located at residue Arg-132. A helical transmembrane segment spans residues 133 to 153; it reads FPEWFHVYYTILFFVLMPIRF. The Cytoplasmic segment spans residues 154-162; that stretch reads YTYYKTKNH. Residues 163-183 traverse the membrane as a helical segment; that stretch reads YFLADFCYFVNMLCLLFIWIF. Over 184 to 187 the chain is Lumenal; it reads PYSY. The helical transmembrane segment at 188-208 threads the bilayer; that stretch reads SLFQSCFAFTFGTLCFAVITW. Residues 209–221 are Cytoplasmic-facing; the sequence is RNSLVIHSIDKTT. A helical transmembrane segment spans residues 222–242; it reads SCFIHIIPPCVMYVIYHGLPL. Topologically, residues 243-263 are lumenal; it reads EYKIERFPGAIIQSELDIKKN. The chain crosses the membrane as a helical span at residues 264–284; that stretch reads ILWTSLYYLVWQSLYHYFITL. Residues 285–318 are Cytoplasmic-facing; that stretch reads KKSSKIKSGERMTSFEYLTTHQFKNFWAVKLRSP. The chain crosses the membrane as a helical span at residues 319–339; that stretch reads WPMIIYTLSQYFYQLFTMLLC. The Lumenal portion of the chain corresponds to 340-346; the sequence is GIWIRYK. The helical transmembrane segment at 347–369 threads the bilayer; the sequence is LAAALFLTIVFLWASHNGATYYI. Topologically, residues 370 to 432 are cytoplasmic; it reads DHYGKNFEKE…DSSSVSSKSD (63 aa). Positions 413–432 are disordered; sequence LNVNRDEDFDDSSSVSSKSD.

This sequence belongs to the GPC1 family.

Its subcellular location is the membrane. The catalysed reaction is sn-glycerol 3-phosphocholine + an acyl-CoA = a 1-acyl-sn-glycero-3-phosphocholine + CoA. It carries out the reaction sn-glycero-3-phosphoethanolamine + an acyl-CoA = a monoacyl-sn-glycero-3-phosphoethanolamine + CoA. It catalyses the reaction sn-glycero-3-phosphoethanolamine + (9Z)-octadecenoyl-CoA = (9Z-octadecenoyl)-sn-glycero-3-phosphoethanolamine + CoA. The enzyme catalyses sn-glycerol 3-phosphocholine + hexadecanoyl-CoA = hexadecanoyl-sn-glycero-3-phosphocholine + CoA. The catalysed reaction is (9Z,12Z)-octadecadienoyl-CoA + sn-glycerol 3-phosphocholine = (9Z,12Z-octadecadienoyl)-sn-glycero-3-phosphocholine + CoA. It carries out the reaction (12R)-hydroxy-(9Z)-octadecenoyl-CoA + sn-glycerol 3-phosphocholine = (12R-hydroxy-9Z-octadecenoyl)-sn-glycero-3-phosphocholine + CoA. It catalyses the reaction (9Z,12Z,15Z)-octadecatrienoyl-CoA + sn-glycerol 3-phosphocholine = (9Z,12Z,15Z-octadecatrienoyl)-sn-glycero-3-phosphocholine + CoA. The enzyme catalyses sn-glycerol 3-phosphocholine + (9Z)-octadecenoyl-CoA = (9Z-octadecenoyl)-sn-glycero-3-phosphocholine + CoA. The catalysed reaction is 1-(9Z-octadecenoyl)-sn-glycero-3-phosphoethanolamine + sn-glycerol 3-phosphocholine = (9Z-octadecenoyl)-sn-glycero-3-phosphocholine + sn-glycero-3-phosphoethanolamine. Its activity is regulated as follows. The GPCAT activity is sensitive to N-ethylmaleimide, phenanthroline, and divalent cations including Ca(2+), Mg(2+), Mn(2+) and Zn(2+). The activity is also inhibited by glycerol-3-phosphate (G3P). Its function is as follows. Glycerophosphocholine acyltransferase (GPCAT) that utilizes acyl-CoA to acylate glycero-3-phosphocholine (GPC), forming lysophosphatidylcholine (LPC). Shows broad acyl specificities with a preference for 16:0-CoA, polyunsaturated acyl-CoA, and the hydroxylated ricinoleoyl-CoA. Also catalyzes the acylation of glycero-3-phosphoethanolamine (GPE) with acyl-CoA. In addition to acyl-CoA, GPCAT efficiently utilizes LPC and lysophosphatidylethanolamine (LPE) as acyl donors in the acylation of GPC. Contributes to the maintenance of phosphatidylcholine (PC) homeostasis and might also have specific functions in acyl editing of PC, such as transferring acyl groups modified at the sn-2 position of PC to the sn-1. Involved in postsynthetic PC remodeling that produces more saturated PC species. This chain is Glycerophosphocholine acyltransferase 1, found in Saccharomyces cerevisiae (strain ATCC 204508 / S288c) (Baker's yeast).